Here is a 130-residue protein sequence, read N- to C-terminus: Sec-independent protein translocase protein TatB (130 aa).

Residues 1–21 (MFDIGFWELVLIFVVGLVVLG) traverse the membrane as a helical segment. The tract at residues 85 to 130 (LKQAAQSVNRPYADVSAKNEATSSSSSDATHQTEATKTSAANTKSE) is disordered. Over residues 112-130 (DATHQTEATKTSAANTKSE) the composition is skewed to polar residues.

The protein belongs to the TatB family. In terms of assembly, the Tat system comprises two distinct complexes: a TatABC complex, containing multiple copies of TatA, TatB and TatC subunits, and a separate TatA complex, containing only TatA subunits. Substrates initially bind to the TatABC complex, which probably triggers association of the separate TatA complex to form the active translocon.

It is found in the cell inner membrane. Its function is as follows. Part of the twin-arginine translocation (Tat) system that transports large folded proteins containing a characteristic twin-arginine motif in their signal peptide across membranes. Together with TatC, TatB is part of a receptor directly interacting with Tat signal peptides. TatB may form an oligomeric binding site that transiently accommodates folded Tat precursor proteins before their translocation. This Vibrio vulnificus (strain CMCP6) protein is Sec-independent protein translocase protein TatB.